Reading from the N-terminus, the 61-residue chain is Metallothionein-1 (61 aa).

Met-1 carries the N-acetylmethionine modification. The segment at Met-1–Cys-29 is beta. A divalent metal cation-binding residues include Cys-5, Cys-7, Cys-13, Cys-15, Cys-19, Cys-21, Cys-24, Cys-26, Cys-29, Cys-33, Cys-34, Cys-36, Cys-37, Cys-41, Cys-44, Cys-48, Cys-50, Cys-57, Cys-59, and Cys-60. An alpha region spans residues Lys-30 to Ala-61.

Belongs to the metallothionein superfamily. Type 1 family.

Functionally, metallothioneins have a high content of cysteine residues that bind various heavy metals; these proteins are transcriptionally regulated by both heavy metals and glucocorticoids. In Mus musculus (Mouse), this protein is Metallothionein-1 (Mt1).